Here is a 314-residue protein sequence, read N- to C-terminus: tRNA pseudouridine synthase B (314 aa).

H43 contributes to the substrate binding site. D48 (nucleophile) is an active-site residue. Substrate contacts are provided by Y76, Y179, and L200.

Belongs to the pseudouridine synthase TruB family. Type 1 subfamily.

The enzyme catalyses uridine(55) in tRNA = pseudouridine(55) in tRNA. Its function is as follows. Responsible for synthesis of pseudouridine from uracil-55 in the psi GC loop of transfer RNAs. The polypeptide is tRNA pseudouridine synthase B (Pectobacterium atrosepticum (strain SCRI 1043 / ATCC BAA-672) (Erwinia carotovora subsp. atroseptica)).